The following is a 177-amino-acid chain: Large ribosomal subunit protein uL6 (177 aa).

This sequence belongs to the universal ribosomal protein uL6 family. Part of the 50S ribosomal subunit.

Its function is as follows. This protein binds to the 23S rRNA, and is important in its secondary structure. It is located near the subunit interface in the base of the L7/L12 stalk, and near the tRNA binding site of the peptidyltransferase center. The protein is Large ribosomal subunit protein uL6 of Teredinibacter turnerae (strain ATCC 39867 / T7901).